The sequence spans 1028 residues: MASSVGWQTSASAIEIAMDRIKSEHLIDNIGINFIYVFDDCNEAKAAGLSSKLLMDANVSAIVGPTCNAAGLAVVNLAGYYNTPVLTWGLTISSSFIDTSKYPTTVTIVPVAKSIAAAIHEVMIQFEWTEFVYVFVEDEKCGYFRDDLEQITSDSNYTSLSRTIQIYDQSYTNLVRQLEKLKTVSRIFTVCLPEAGDIKRRFMLAAYDLDMTTDEYVYLFAGPKSTAYQQTSSTGDVVGIWVDWSENPDGRDEEAKLAFMRTMVIVATPVQGEQYAAFKKEVIERMKLPPYNCVDECKEKEYQEAAEYADQLHDTIYLYALILNKTIEEQGIEQIANGSNIVTRGAGIEFEGMSGVVRMNGIGYRLPNMNLANLDSNATQRTVAYMDIDSTSVNWTFAIIDQALIWDAYNGKLPQTRPECGYSGKSCPVNFFVDYLYIVVIVAVIIVLCCAAAAIAAFLVIKARRDEELRLDDQWIVPHGMLQSIIKGRKESHHSSRSLQSNSTTTTGTTGISSRSVFFPETETQGYFVYMNEPVLARKYQLRVPIFKQDRSELRMLRSIEHDNVNRFIGLSIDGPVYMSFWRYCSRGSIKDVIAKSSINMDGFFIYCLIKDIASGLQYIHHSPIKQHGSLTSECCYINDRWQVKIGSYGLSFMQGVEKRTEDGLLHTAPEVLREGLTSGTQAGDVYSFSIVCSELVGHSSAWNLENRKEEADEIIFMVKRGGRTPFRPSLDDVDDDINPAMLHLIRDCWDEDPKQRPNIDMVNKLMKNMNSGRSGSANLMDHVFSVLEKHASSLEDEVQERMKELVEEKKKSDILLYRMLPQQVAERLKLGQSVEPEAFESVTIFFSDVVGFTVLANKSTPLQVVNLLNDLYTTFDAIIEKNDSYKVETIGDAYLVVSGLPRRNGTEHVANIANMSLELMDSLQAFKIPHLPQEKVQIRIGMHSGSCVAGVVGLTMPRYCLFGDTVNTASRMESNGKPGFIHLSSDCYDLLTSLYKEYNTESRGEVIIKGKGVMQTYWLLGMKEESA.

N-linked (GlcNAc...) asparagine glycans are attached at residues N58, N156, N324, N337, N377, and N394. A helical transmembrane segment spans residues 438–458; that stretch reads IVVIVAVIIVLCCAAAAIAAF. The Cytoplasmic segment spans residues 459–1028; sequence LVIKARRDEE…WLLGMKEESA (570 aa). The interval 491 to 511 is disordered; the sequence is ESHHSSRSLQSNSTTTTGTTG. Residues 497-511 show a composition bias toward low complexity; that stretch reads RSLQSNSTTTTGTTG. The region spanning 499-770 is the Protein kinase domain; it reads LQSNSTTTTG…DMVNKLMKNM (272 aa). The stretch at 786–817 forms a coiled coil; that stretch reads SVLEKHASSLEDEVQERMKELVEEKKKSDILL. Positions 844-974 constitute a Guanylate cyclase domain; the sequence is TIFFSDVVGF…DTVNTASRME (131 aa).

The protein belongs to the adenylyl cyclase class-4/guanylyl cyclase family. In terms of tissue distribution, expressed bilaterally in RIM interneurons.

The protein localises to the cell membrane. The enzyme catalyses GTP = 3',5'-cyclic GMP + diphosphate. In terms of biological role, guanylate cyclase involved in the production of the second messenger cGMP. The sequence is that of Receptor-type guanylate cyclase gcy-13 from Caenorhabditis elegans.